The primary structure comprises 500 residues: MKNIAFDSNKYLSLQRNHILERIKQFDGKLYMEFGGKMLEDFHAARVLPGYEPDNKIKLLKELKDQVEIVITINANNIEHSKTRGDLGISYDQEVLRLIDTFNALDIYVGSVVITQYNHQAAADHFQKQLAKNGITSYRHYPIKGYPTDINHIISPDGMGRNDYIKTSRNLIVVTAPGPGSGKLATCISQLYHDQLNGITSGYAKFETFPVWNLPLHHPVNLAYEAATADLDDVNMIDPFHLEAYGKTAVNYNRDIEVFPVLNRTFERILSQSPYASPTDMGVNMVGFSIVNEEAAIEASKQEIIRRYYQTLVDFKAERVTETAVKKLELLMNDIGVTPKDRQVTLIARQKAELTGQPALALQLPNGQVVTGKTSDLFGPTAAVIINAIKTLAHISKETHLIEPEYVKPIQGLKINHLGSHNPRLHANEILMALAITAMNNNQADLAMKELGNLKGSEAHSTVILTNEDKHALRQLGINVTFDPVYQHHKLYRSQSQTSS.

Belongs to the UPF0371 family.

The polypeptide is UPF0371 protein SZO_06760 (Streptococcus equi subsp. zooepidemicus (strain H70)).